Here is a 352-residue protein sequence, read N- to C-terminus: 4-hydroxybenzaldehyde synthase, chloroplastic (352 aa).

N-linked (GlcNAc...) asparagine glycosylation is present at N122. Disulfide bonds link C159–C199 and C190–C231. N247 is a glycosylation site (N-linked (GlcNAc...) asparagine). A disulfide bond links C289 and C339. Active-site residues include H298 and N318.

This sequence belongs to the peptidase C1 family. As to quaternary structure, forms homodimers, homotrimers and homotetramers. In terms of tissue distribution, mainly expressed in pods, but also present in stems, roots, leaves and embryos (at protein level).

The protein localises to the plastid. It localises to the chloroplast. It carries out the reaction (E)-4-coumarate + H2O = 4-hydroxybenzaldehyde + acetate. Its pathway is aromatic compound metabolism; phenylpropanoid biosynthesis. Inhibited by ascorbate. Involved in the biosynthesis of vanillin (4-hydroxy-3-methoxy-benzaldehyde) and derivative natural products, key components of vanilla pods flavor. Catalyzes the conversion of (E)-4-coumarate to 4-hydroxybenzaldehyde, a vanillin precursor. Mediates the conversion of ferulic acid to 3-methoxy-4-hydroxybenzaldehyde with a very low efficiency. Cannot use cinnamic, caffeic, sinapic and o-coumaric acids as substrates. In Vanilla planifolia (Vanilla), this protein is 4-hydroxybenzaldehyde synthase, chloroplastic.